The chain runs to 271 residues: D-methionine-binding lipoprotein MetQ (271 aa).

Positions 1-22 are cleaved as a signal peptide; the sequence is MAFKFKTFAAVGALIGSLALAG. The N-palmitoyl cysteine moiety is linked to residue Cys-23. Residue Cys-23 is the site of S-diacylglycerol cysteine attachment.

It belongs to the NlpA lipoprotein family.

The protein resides in the cell membrane. This protein is a component of a D-methionine permease, a binding protein-dependent, ATP-driven transport system. In Salmonella typhi, this protein is D-methionine-binding lipoprotein MetQ (metQ).